Here is a 774-residue protein sequence, read N- to C-terminus: Lysyl oxidase homolog 2 (774 aa).

The first 25 residues, 1–25 (MERRGSSCLCRCLALLALLPTLSLA), serve as a signal peptide directing secretion. 4 consecutive SRCR domains span residues 58 to 159 (LRLA…VVCS), 188 to 302 (IRAI…VSCV), 326 to 425 (VRLR…VRCN), and 435 to 544 (LRLN…VACS). 9 disulfides stabilise this stretch: C84–C148, C97–C158, C128–C138, C218–C291, C231–C301, C265–C275, C351–C414, C364–C424, and C395–C405. N288 carries N-linked (GlcNAc...) asparagine glycosylation. N-linked (GlcNAc...) asparagine glycosylation occurs at N455. 3 cysteine pairs are disulfide-bonded: C464-C530, C477-C543, and C511-C521. Positions 548 to 751 (PDLVLNAEIV…WMYNCHIGGS (204 aa)) are lysyl-oxidase like. Ca(2+)-binding residues include D549 and L550. 4 cysteine pairs are disulfide-bonded: C573–C625, C579–C695, C657–C673, and C663–C685. Positions 626, 628, and 630 each coordinate Cu cation. N-linked (GlcNAc...) asparagine glycosylation occurs at N644. Residues 653-689 (KASFCLEDTECEGDIQKSYECANFGEQGITMGCWDMY) constitute a cross-link (lysine tyrosylquinone (Lys-Tyr)). The residue at position 689 (Y689) is a 2',4',5'-topaquinone. Ca(2+)-binding residues include E722, D724, N727, and N728. The cysteines at positions 732 and 746 are disulfide-linked.

This sequence belongs to the lysyl oxidase family. As to quaternary structure, component of some chromatin repressor complex. Interacts with SNAI1. Interacts with TAF10. Interacts with HSPA5. Interacts with EFEMP2. It depends on Cu cation as a cofactor. Lysine tyrosylquinone residue is required as a cofactor. In terms of processing, the lysine tyrosylquinone cross-link (LTQ) is generated by condensation of the epsilon-amino group of a lysine with a topaquinone produced by oxidation of tyrosine. N-glycosylated. N-glycosylation on Asn-455 and Asn-644 may be essential for proper folding and secretion; may be composed of a fucosylated carbohydrates attached to a trimannose N-linked glycan core.

It is found in the secreted. It localises to the extracellular space. The protein localises to the extracellular matrix. The protein resides in the basement membrane. Its subcellular location is the nucleus. It is found in the chromosome. It localises to the endoplasmic reticulum. The catalysed reaction is L-lysyl-[protein] + O2 + H2O = (S)-2-amino-6-oxohexanoyl-[protein] + H2O2 + NH4(+). With respect to regulation, specifically inhibited by a mouse monoclonal antibody AB0023, inhibition occurs in a non-competitive manner. Its function is as follows. Mediates the post-translational oxidative deamination of lysine residues on target proteins leading to the formation of deaminated lysine (allysine). Acts as a transcription corepressor and specifically mediates deamination of trimethylated 'Lys-4' of histone H3 (H3K4me3), a specific tag for epigenetic transcriptional activation. Shows no activity against histone H3 when it is trimethylated on 'Lys-9' (H3K9me3) or 'Lys-27' (H3K27me3) or when 'Lys-4' is monomethylated (H3K4me1) or dimethylated (H3K4me2). Also mediates deamination of methylated TAF10, a member of the transcription factor IID (TFIID) complex, which induces release of TAF10 from promoters, leading to inhibition of TFIID-dependent transcription. LOXL2-mediated deamination of TAF10 results in transcriptional repression of genes required for embryonic stem cell pluripotency including POU5F1/OCT4, NANOG, KLF4 and SOX2. Involved in epithelial to mesenchymal transition (EMT) via interaction with SNAI1 and participates in repression of E-cadherin CDH1, probably by mediating deamination of histone H3. During EMT, involved with SNAI1 in negatively regulating pericentromeric heterochromatin transcription. SNAI1 recruits LOXL2 to pericentromeric regions to oxidize histone H3 and repress transcription which leads to release of heterochromatin component CBX5/HP1A, enabling chromatin reorganization and acquisition of mesenchymal traits. Interacts with the endoplasmic reticulum protein HSPA5 which activates the IRE1-XBP1 pathway of the unfolded protein response, leading to expression of several transcription factors involved in EMT and subsequent EMT induction. When secreted into the extracellular matrix, promotes cross-linking of extracellular matrix proteins by mediating oxidative deamination of peptidyl lysine residues in precursors to fibrous collagen and elastin. Acts as a regulator of sprouting angiogenesis, probably via collagen IV scaffolding. Acts as a regulator of chondrocyte differentiation, probably by regulating expression of factors that control chondrocyte differentiation. The protein is Lysyl oxidase homolog 2 (LOXL2) of Bos taurus (Bovine).